The primary structure comprises 291 residues: Bis(5'-nucleosyl)-tetraphosphatase, symmetrical (291 aa).

This sequence belongs to the Ap4A hydrolase family.

It carries out the reaction P(1),P(4)-bis(5'-adenosyl) tetraphosphate + H2O = 2 ADP + 2 H(+). Hydrolyzes diadenosine 5',5'''-P1,P4-tetraphosphate to yield ADP. This Coxiella burnetii (strain Dugway 5J108-111) protein is Bis(5'-nucleosyl)-tetraphosphatase, symmetrical.